The sequence spans 156 residues: MIYILEGLDGTGKTSFASELIKSQVFSRPMYVYFSKEDSYENTKLAWVSLIKELSKLNFNIIMDRSIISTIAYHFTYRPSKEYENFIRSELESVLNLDPSKAVFIHFVKVHDSKKLLEYANRVKSIRDNYHLLMRILREKGFNVIVNGGQKDFNLF.

Residue 7-14 coordinates ATP; it reads GLDGTGKT.

It belongs to the thymidylate kinase family.

It catalyses the reaction dTMP + ATP = dTDP + ADP. It participates in pyrimidine metabolism; dTTP biosynthesis. Its function is as follows. Catalyzes the conversion of dTMP to dTDP. The chain is Putative thymidylate kinase from Acidianus convivator (ABV).